The following is a 938-amino-acid chain: Isoleucine--tRNA ligase (938 aa).

Residues 58 to 68 (PYANGSIHIGH) carry the 'HIGH' region motif. The residue at position 183 (Lys183) is an N6-acetyllysine. Glu561 serves as a coordination point for L-isoleucyl-5'-AMP. Residues 602–606 (KMSKS) carry the 'KMSKS' region motif. An ATP-binding site is contributed by Lys605. Residues Cys901, Cys904, Cys921, and Cys924 each contribute to the Zn(2+) site.

Belongs to the class-I aminoacyl-tRNA synthetase family. IleS type 1 subfamily. Monomer. It depends on Zn(2+) as a cofactor.

The protein resides in the cytoplasm. The catalysed reaction is tRNA(Ile) + L-isoleucine + ATP = L-isoleucyl-tRNA(Ile) + AMP + diphosphate. Catalyzes the attachment of isoleucine to tRNA(Ile). As IleRS can inadvertently accommodate and process structurally similar amino acids such as valine, to avoid such errors it has two additional distinct tRNA(Ile)-dependent editing activities. One activity is designated as 'pretransfer' editing and involves the hydrolysis of activated Val-AMP. The other activity is designated 'posttransfer' editing and involves deacylation of mischarged Val-tRNA(Ile). The chain is Isoleucine--tRNA ligase from Escherichia coli O7:K1 (strain IAI39 / ExPEC).